Reading from the N-terminus, the 3479-residue chain is Abnormal spindle-like microcephaly-associated protein homolog (3479 aa).

The interval 1–29 (MANRRVGRGCWEVSPTERRPPAALRGPAT) is disordered. Ser-280, Ser-283, Ser-367, Ser-392, Ser-425, and Ser-605 each carry phosphoserine. Positions 920–1056 (KASKEILLAF…LLWKIAFAFQ (137 aa)) constitute a Calponin-homology (CH) 1 domain. Residues 1057–1078 (VDISLNLDQLKEEIAFLKHTKS) adopt a coiled-coil conformation. Residue Ser-1103 is modified to Phosphoserine. The 152-residue stretch at 1110–1261 (SENIKLLMDW…YLSFLCARLL (152 aa)) folds into the Calponin-homology (CH) 2 domain. IQ domains are found at residues 1347 to 1378 (QNKA…IILQ), 1393 to 1422 (YLWA…MLKS), 1582 to 1613 (LKKT…VIIQ), 1605 to 1634 (MKKA…KTRS), 1632 to 1661 (TRSA…SVIK), 1655 to 1684 (ILTS…TTIK), 1728 to 1757 (MRES…AVIS), 1751 to 1782 (QRKA…MVIQ), 1801 to 1830 (VKKA…AALK), 1824 to 1853 (QSIA…SIIK), 1874 to 1903 (TKAA…AALK), 1897 to 1928 (EHQA…LVIQ), 1947 to 1978 (LRHA…IIIQ), 1970 to 2001 (QHKC…LLIQ), 2020 to 2049 (TKAA…AAVT), 2043 to 2074 (CNKA…IIIQ), 2093 to 2124 (LKKT…TFIK), 2116 to 2147 (MHRA…IVIQ), 2239 to 2270 (LRHS…TLIQ), 2262 to 2293 (MHVA…VWIQ), 2311 to 2342 (VQNA…TFIQ), 2334 to 2365 (MHRA…VVIQ), 2384 to 2415 (QRRS…TLIQ), 2407 to 2438 (MHSS…IFVQ), 2533 to 2564 (QWHS…IIIQ), 2627 to 2656 (QHQA…TVVS), 2668 to 2699 (RTQA…TLIQ), 2691 to 2722 (MHRA…VVIQ), 2741 to 2770 (VQKS…EKMA), 2817 to 2848 (QSRA…RIQF), 2862 to 2893 (QKRA…VVLQ), 2912 to 2941 (IRSS…STIK), 2935 to 2966 (IKNS…KIQA), 2957 to 2988 (KVKA…KIIQ), 3032 to 3063 (RHRA…LIIQ), 3082 to 3113 (FKKS…RLLH), and 3206 to 3237 (FTSG…IRLS).

Its subcellular location is the cytoplasm. It is found in the cytoskeleton. The protein localises to the spindle. The protein resides in the nucleus. Probable role in mitotic spindle regulation and coordination of mitotic processes. May have a preferential role in regulating neurogenesis. This Macaca mulatta (Rhesus macaque) protein is Abnormal spindle-like microcephaly-associated protein homolog (ASPM).